Consider the following 623-residue polypeptide: Lethal(3)malignant brain tumor-like protein 4 (623 aa).

Residues M1 to P44 are disordered. Residues L10–D35 are compositionally biased toward basic and acidic residues. MBT repeat units lie at residues W52–P152, F160–P260, and F269–P364. The segment at L370–E414 adopts a CCHHC-type zinc-finger fold. Positions 379, 384, 398, and 404 each coordinate Zn(2+). In terms of domain architecture, SAM spans W543 to S607.

It localises to the nucleus. In terms of biological role, putative Polycomb group (PcG) protein. PcG proteins maintain the transcriptionally repressive state of genes, probably via a modification of chromatin, rendering it heritably changed in its expressibility. This Homo sapiens (Human) protein is Lethal(3)malignant brain tumor-like protein 4 (L3MBTL4).